Reading from the N-terminus, the 593-residue chain is Aspartate--tRNA ligase (593 aa).

E180 serves as a coordination point for L-aspartate. The segment at 204–207 (QLFK) is aspartate. Residue R226 coordinates L-aspartate. Residues 226-228 (RDE) and Q235 contribute to the ATP site. H454 serves as a coordination point for L-aspartate. E488 lines the ATP pocket. R495 serves as a coordination point for L-aspartate. Position 540–543 (540–543 (GFDR)) interacts with ATP.

This sequence belongs to the class-II aminoacyl-tRNA synthetase family. Type 1 subfamily. As to quaternary structure, homodimer.

It localises to the cytoplasm. It carries out the reaction tRNA(Asp) + L-aspartate + ATP = L-aspartyl-tRNA(Asp) + AMP + diphosphate. Functionally, catalyzes the attachment of L-aspartate to tRNA(Asp) in a two-step reaction: L-aspartate is first activated by ATP to form Asp-AMP and then transferred to the acceptor end of tRNA(Asp). The protein is Aspartate--tRNA ligase of Clostridium novyi (strain NT).